The following is a 1220-amino-acid chain: Plasma membrane calcium-transporting ATPase 1 (1220 aa).

Residue G2 is modified to N-acetylglycine. The Cytoplasmic portion of the chain corresponds to 2-105 (GDMANNSVAY…KTFLQLVWEA (104 aa)). 2 positions are modified to phosphoserine: S8 and S17. A helical membrane pass occupies residues 106–126 (LQDVTLIILEIAAIVSLGLSF). At 127–154 (YQPPEGDNALCGEVSVGEEEGEGETGWI) the chain is on the extracellular side. The chain crosses the membrane as a helical span at residues 155-175 (EGAAILLSVVCVVLVTAFNDW). Topologically, residues 176–366 (SKEKQFRGLQ…KEKSVLQGKL (191 aa)) are cytoplasmic. Residues 297–356 (EEEKKDEKKKEKKNKKQDGAIENRNKAKAQDGAAMEMQPLKSEEGGDGDEKDKKKANLPK) form a disordered region. Basic and acidic residues-rich tracts occupy residues 312-325 (KQDG…KAKA) and 337-356 (KSEE…NLPK). A Phosphoserine modification is found at S338. Residues 367–386 (TKLAVQIGKAGLLMSAITVI) form a helical membrane-spanning segment. Residues 387–418 (ILVLYFVIDTFWVQKRPWLAECTPIYIQYFVK) lie on the Extracellular side of the membrane. A helical transmembrane segment spans residues 419 to 439 (FFIIGVTVLVVAVPEGLPLAV). The Cytoplasmic segment spans residues 440 to 855 (TISLAYSVKK…RNVYDSISKF (416 aa)). The 4-aspartylphosphate intermediate role is filled by D475. Positions 475, 477, and 797 each coordinate Mg(2+). Residues 856–876 (LQFQLTVNVVAVIVAFTGACI) traverse the membrane as a helical segment. At 877 to 882 (TQDSPL) the chain is on the extracellular side. The helical transmembrane segment at 883–903 (KAVQMLWVNLIMDTLASLALA) threads the bilayer. Topologically, residues 904-927 (TEPPTESLLLRKPYGRNKPLISRT) are cytoplasmic. A helical membrane pass occupies residues 928–948 (MMKNILGHAFYQLVVVFTLLF). Residues 949 to 971 (AGEKFFDIDSGRNAPLHAPPSEH) lie on the Extracellular side of the membrane. A helical membrane pass occupies residues 972–991 (YTIVFNTFVLMQLFNEINAR). At 992-1005 (KIHGERNVFEGIFN) the chain is on the cytoplasmic side. A helical transmembrane segment spans residues 1006–1027 (NAIFCTIVLGTFVVQIIIVQFG). Over 1028 to 1039 (GKPFSCSELSIE) the chain is Extracellular. A helical transmembrane segment spans residues 1040 to 1060 (QWLWSIFLGMGTLLWGQLIST). Topologically, residues 1061–1220 (IPTSRLKFLK…SPLHSLETSL (160 aa)) are cytoplasmic. Residues 1100–1117 (LRRGQILWFRGLNRIQTQ) form a calmodulin-binding subdomain A region. Phosphothreonine; by PKC is present on T1116. The segment at 1118 to 1220 (IRVVNAFRSS…SPLHSLETSL (103 aa)) is required for basolateral membrane targeting. Phosphoserine occurs at positions 1140 and 1155. The disordered stretch occupies residues 1160–1220 (PLIDDTDAED…SPLHSLETSL (61 aa)). T1165 is modified (phosphothreonine). A Phosphoserine; by PKA modification is found at S1178. Phosphoserine is present on S1182. Polar residues predominate over residues 1200-1220 (MNKSATSSSPGSPLHSLETSL).

The protein belongs to the cation transport ATPase (P-type) (TC 3.A.3) family. Type IIB subfamily. In terms of assembly, monomer. Dimer. Oligomer. Calmodulin binding. Interacts with PDZD11. Interacts with SLC35G1 and STIM1; inhibits calcium-transporting ATPase activity after store depletion. Interacts with YWHAE; interacts with the monomeric and dimeric forms of the YWHAE but prefer the monomer form; this interaction inhibits calcium-transporting ATPase activity. Interacts with NPTN; this interaction stabilizes ATP2B1 and increases ATPase activity; this interaction controls T cell calcium homeostasis following T cell activation. Interacts with EPB41; regulates small intestinal calcium absorption through regulation of membrane expression of ATP2B1. As to expression, isoform B: Ubiquitously expressed. Isoform C: Found in brain cortex, skeletal muscle and heart muscle. Isoform D: Has only been found in fetal skeletal muscle. Isoform K: Found in small intestine and liver. Abundantly expressed in the endometrial epithelial cells and glandular epithelial cells in early-proliferative phase and early-secretory phases.

The protein resides in the cell membrane. It is found in the basolateral cell membrane. Its subcellular location is the synapse. The protein localises to the presynaptic cell membrane. It localises to the cytoplasmic vesicle. The protein resides in the secretory vesicle. It is found in the synaptic vesicle membrane. It catalyses the reaction Ca(2+)(in) + ATP + H2O = Ca(2+)(out) + ADP + phosphate + H(+). In terms of biological role, catalyzes the hydrolysis of ATP coupled with the transport of calcium from the cytoplasm to the extracellular space thereby maintaining intracellular calcium homeostasis. Plays a role in blood pressure regulation through regulation of intracellular calcium concentration and nitric oxide production leading to regulation of vascular smooth muscle cells vasoconstriction. Positively regulates bone mineralization through absorption of calcium from the intestine. Plays dual roles in osteoclast differentiation and survival by regulating RANKL-induced calcium oscillations in preosteoclasts and mediating calcium extrusion in mature osteoclasts. Regulates insulin sensitivity through calcium/calmodulin signaling pathway by regulating AKT1 activation and NOS3 activation in endothelial cells. May play a role in synaptic transmission by modulating calcium and proton dynamics at the synaptic vesicles. This Homo sapiens (Human) protein is Plasma membrane calcium-transporting ATPase 1.